An 897-amino-acid chain; its full sequence is Serine/threonine-protein kinase ATG1 (897 aa).

The Protein kinase domain occupies 24 to 325 (YTAEKEIGKG…FEEFFANKVV (302 aa)). ATP is bound by residues 30–38 (IGKGSFATV) and Lys-54. Ser-34 bears the Phosphoserine mark. The residue at position 129 (Thr-129) is a Phosphothreonine. Asp-172 serves as the catalytic Proton acceptor. Thr-226 carries the post-translational modification Phosphothreonine; by autocatalysis. A phosphoserine mark is found at Ser-304, Ser-365, and Ser-390. The short motif at 429–432 (YVVV) is the LIR element. Residues 490–509 (LLRATSSSSGGSDGSRRPSL) form a disordered region. Residues Ser-508 and Ser-515 each carry the phosphoserine; by PKA modification. 3 positions are modified to phosphoserine: Ser-533, Ser-551, and Ser-552. Thr-590 is subject to Phosphothreonine. Ser-621, Ser-635, Ser-638, Ser-647, Ser-677, Ser-680, Ser-683, Ser-769, and Ser-783 each carry phosphoserine. Positions 880–886 (DSIANRL) are required for Cvt trafficking.

The protein belongs to the protein kinase superfamily. Ser/Thr protein kinase family. APG1/unc-51/ULK1 subfamily. In terms of assembly, homodimer. Dimerization requires the presence of ATG13. Forms a ternary complex with ATG13 and ATG17. Also interacts with ATG11. Post-translationally, autophosphorylated at Thr-226 and Ser-390. The phosphorylation state may play a role in the induction of protein degradation upon starvation. Phosphorylation at Thr-226 within the activation loop is required for protein kinase activity whereas phosphorylation at Ser-34 leads to inhibition of kinase activity. Phosphorylation of Ser-508 and Ser-515 by PKA is required to induce autophagy but not for kinase activity.

It is found in the cytoplasm. The protein resides in the preautophagosomal structure membrane. The catalysed reaction is L-seryl-[protein] + ATP = O-phospho-L-seryl-[protein] + ADP + H(+). It catalyses the reaction L-threonyl-[protein] + ATP = O-phospho-L-threonyl-[protein] + ADP + H(+). Activated by hypophosphorylated form of ATG13 (present in nitrogen starvation conditions). Also activated by autophopsphorylation of Thr-226 and inhibited by phosphorylation of Ser-34. Functionally, serine/threonine protein kinase involved in the cytoplasm to vacuole transport (Cvt) and found to be essential in autophagy, where it is required for the formation of autophagosomes. Involved in the clearance of protein aggregates which cannot be efficiently cleared by the proteasome. Required for selective autophagic degradation of the nucleus (nucleophagy) as well as for mitophagy which contributes to regulate mitochondrial quantity and quality by eliminating the mitochondria to a basal level to fulfill cellular energy requirements and preventing excess ROS production. Also involved in endoplasmic reticulum-specific autophagic process, in selective removal of ER-associated degradation (ERAD) substrates. Plays a key role in ATG9 and ATG23 cycling through the pre-autophagosomal structure and is necessary to promote ATG18 binding to ATG9 through phosphorylation of ATG9. Catalyzes phosphorylation of ATG4, decreasing the interaction between ATG4 and ATG8 and impairing deconjugation of PE-conjugated forms of ATG8. Finally, ATG1 is also required for the maintenance of cell viability under starvation and for glycogen storage during stationary phase. Plays a role in genome stability through suppression of abnormal mitosis under starvation, and in regulation of filamentous growth. This Saccharomyces cerevisiae (strain YJM789) (Baker's yeast) protein is Serine/threonine-protein kinase ATG1.